A 159-amino-acid chain; its full sequence is Transcription elongation factor GreA (159 aa).

The stretch at Arg-5–Ile-77 forms a coiled coil.

Belongs to the GreA/GreB family.

Its function is as follows. Necessary for efficient RNA polymerase transcription elongation past template-encoded arresting sites. The arresting sites in DNA have the property of trapping a certain fraction of elongating RNA polymerases that pass through, resulting in locked ternary complexes. Cleavage of the nascent transcript by cleavage factors such as GreA or GreB allows the resumption of elongation from the new 3'terminus. GreA releases sequences of 2 to 3 nucleotides. The chain is Transcription elongation factor GreA from Alkaliphilus oremlandii (strain OhILAs) (Clostridium oremlandii (strain OhILAs)).